A 693-amino-acid chain; its full sequence is MILTIILYTLLFSTCSAQSVHTMPEAVSRLNWGVMFNRGPTIMNGITKYRHTFEVKVPQLVYTPIVHMKCDTDYLKVLHCEAINDLIDSINGQVEPLITELKTRIATWMNPIPNVDTLTLPETQGRRGRRRREATLGPDYCKKINDPNYEGGGGGFLSSVGNFFSSLMGSPTWDDIKIIDKHICQLADVVDLNKEKIVQLGTEFATFSKAANNRMDALEDGMKNINTRVTETNLLLEKLSTEVTGALTQLENEIKMSMAGTNLLFRVQKQLYKFQEQINTMSATVEDFGNGINVLLSGRLAPQLVSVDSVKYVIDIISEKLTQQGGETRLVDQNPALYYLLNNVVFTKSEKLNSLYIMVSFPIYSIGGLMATYRLDKTYISIKEDVVSSTQIADLPDFLAVTPDGLYYSEFSTSEISSCTGDVIKSCKNERALQSFTQMTCAAALYKDDSTKILELCDIRYDQITVPSTAIKITDDTYMIHSSKVGTGHQWTISCPLIPNYVSTTMDACNACVVQVSCGCELIAPGEFYIPLQLTGCSKVLSSYIPHIEPKFPVNLPVLYAYFDDSVLNEINGDKLLNYKWKLDIPSIAPLEEEWSQSVERSQKYSSSLKKLLEETKANRKVYASKATAMLKKATDFTDLKLSKIKTLSDTFKDLSWLTKFGTGGGIAGVTIGLLLPILAIVFSCYVFCKRRV.

The signal sequence occupies residues Met1–Ala17. Residues Gln18–Gly666 are Extracellular-facing. Positions Ser208–Met256 form a coiled coil. A helical membrane pass occupies residues Ile667 to Val687. At Phe688–Val693 the chain is on the cytoplasmic side.

The protein resides in the host membrane. This Magallana gigas (Pacific oyster) protein is Putative transmembrane protein ORF68.